Consider the following 138-residue polypeptide: Putative pre-16S rRNA nuclease (138 aa).

The protein belongs to the YqgF nuclease family.

It localises to the cytoplasm. Its function is as follows. Could be a nuclease involved in processing of the 5'-end of pre-16S rRNA. This is Putative pre-16S rRNA nuclease from Bacillus pumilus (strain SAFR-032).